The sequence spans 291 residues: MKKTLMASAVGAVIAFGTHGAMAAAPADWSSVAATDVTLFYPGVSPVEWITKGTEHGGARALKKGETCAGCHSEEASDMGEKMASGKKLEPSPIAGKAPFINAKVQAANDGENLYLRFTWKQPAASGAAPMDADNPVKIAYMLEGGSKVELAEAGGCWGSCHGDARTMPGAADTKTKYVKDGSLANGVYYDLNQWRSGENKAFDGYVATERVMEGGQALVDAQGKLDGDTWTVVFTRKFAGGEGDVTLAPGNLYNFGFAIHDDSATGRYHHVSLGYSLGIDAQGDITAAKQ.

Residues 1–23 form the signal peptide; the sequence is MKKTLMASAVGAVIAFGTHGAMA. Heme c is bound by residues Cys-68, Cys-71, His-72, Cys-157, Cys-161, and His-162.

Binds 2 heme c groups per subunit.

The protein resides in the periplasm. Its function is as follows. May play a role in nitrite reduction. Shows peroxidase activity on proteolytic modification. The chain is Cytochrome c-552 (nirB) from Stutzerimonas stutzeri (Pseudomonas stutzeri).